We begin with the raw amino-acid sequence, 214 residues long: Protein-L-isoaspartate O-methyltransferase (214 aa).

Ser63 is an active-site residue.

The protein belongs to the methyltransferase superfamily. L-isoaspartyl/D-aspartyl protein methyltransferase family.

The protein resides in the cytoplasm. The enzyme catalyses [protein]-L-isoaspartate + S-adenosyl-L-methionine = [protein]-L-isoaspartate alpha-methyl ester + S-adenosyl-L-homocysteine. Functionally, catalyzes the methyl esterification of L-isoaspartyl residues in peptides and proteins that result from spontaneous decomposition of normal L-aspartyl and L-asparaginyl residues. It plays a role in the repair and/or degradation of damaged proteins. The protein is Protein-L-isoaspartate O-methyltransferase of Desulfotalea psychrophila (strain LSv54 / DSM 12343).